A 205-amino-acid chain; its full sequence is Endoribonuclease YbeY (205 aa).

Zn(2+) is bound by residues His-124, His-128, and His-134. Positions 162 to 205 are disordered; that stretch reads GTAPVAPGGEAQVPNEALETSGKRQDHSLGEILPGGMSRRLAGS.

It belongs to the endoribonuclease YbeY family. The cofactor is Zn(2+).

Its subcellular location is the cytoplasm. Single strand-specific metallo-endoribonuclease involved in late-stage 70S ribosome quality control and in maturation of the 3' terminus of the 16S rRNA. This Beijerinckia indica subsp. indica (strain ATCC 9039 / DSM 1715 / NCIMB 8712) protein is Endoribonuclease YbeY.